A 1400-amino-acid chain; its full sequence is RNA polymerase II-associated protein 1 (1400 aa).

Disordered stretches follow at residues 35–54 (KGSR…QDHR), 60–95 (DSLP…EERL), 161–215 (VSDN…GKGL), and 269–310 (REQT…DKLE). 2 stretches are compositionally biased toward basic and acidic residues: residues 39-54 (RRGD…QDHR) and 85-95 (LPHDEDPEERL). A compositionally biased stretch (basic and acidic residues) spans 269–282 (REQTETKATKEQNP). Residue threonine 329 is modified to Phosphothreonine. The disordered stretch occupies residues 504-539 (PSHDDKEDEDEDEELTKEKVNRKTPEEGSRPPPDLA). Over residues 509 to 518 (KEDEDEDEEL) the composition is skewed to acidic residues. Residues 519 to 539 (TKEKVNRKTPEEGSRPPPDLA) are compositionally biased toward basic and acidic residues.

Belongs to the RPAP1 family. Part of an RNA polymerase II complex that contains POLR2A, POLR2B, POLR2C, POLR2D, POLR2E, POLR2F, POLR2G, POLR2H, POLR2I, POLR2J, POLR2K, POLR2L, RPAP1, FCP1 plus the general transcription factors TFIIB and TFIIF.

It is found in the nucleus. Its function is as follows. Forms an interface between the RNA polymerase II enzyme and chaperone/scaffolding protein, suggesting that it is required to connect RNA polymerase II to regulators of protein complex formation. Required for interaction of the RNA polymerase II complex with acetylated histone H3. This Rattus norvegicus (Rat) protein is RNA polymerase II-associated protein 1 (Rpap1).